The chain runs to 262 residues: Acyl-[acyl-carrier-protein]--UDP-N-acetylglucosamine O-acyltransferase (262 aa).

This sequence belongs to the transferase hexapeptide repeat family. LpxA subfamily. Homotrimer.

Its subcellular location is the cytoplasm. The catalysed reaction is a (3R)-hydroxyacyl-[ACP] + UDP-N-acetyl-alpha-D-glucosamine = a UDP-3-O-[(3R)-3-hydroxyacyl]-N-acetyl-alpha-D-glucosamine + holo-[ACP]. It functions in the pathway glycolipid biosynthesis; lipid IV(A) biosynthesis; lipid IV(A) from (3R)-3-hydroxytetradecanoyl-[acyl-carrier-protein] and UDP-N-acetyl-alpha-D-glucosamine: step 1/6. Functionally, involved in the biosynthesis of lipid A, a phosphorylated glycolipid that anchors the lipopolysaccharide to the outer membrane of the cell. This Vibrio campbellii (strain ATCC BAA-1116) protein is Acyl-[acyl-carrier-protein]--UDP-N-acetylglucosamine O-acyltransferase.